The following is a 137-amino-acid chain: Cytochrome c2 (137 aa).

A signal peptide spans methionine 1–alanine 21. Cysteine 34, cysteine 37, histidine 38, and methionine 117 together coordinate heme c.

This sequence belongs to the cytochrome c family. In terms of processing, binds 1 heme c group covalently per subunit.

Cytochrome c2 is found mainly in purple, non-sulfur, photosynthetic bacteria where it functions as the electron donor to the oxidized bacteriochlorophyll in the photophosphorylation pathway. However, it may also have a role in the respiratory chain and is found in some non-photosynthetic bacteria. This chain is Cytochrome c2 (cycA), found in Rhodobacter capsulatus (strain ATCC BAA-309 / NBRC 16581 / SB1003).